Here is a 151-residue protein sequence, read N- to C-terminus: Small ribosomal subunit protein uS19 (151 aa).

Belongs to the universal ribosomal protein uS19 family.

In terms of biological role, protein S19 forms a complex with S13 that binds strongly to the 16S ribosomal RNA. The protein is Small ribosomal subunit protein uS19 of Picrophilus torridus (strain ATCC 700027 / DSM 9790 / JCM 10055 / NBRC 100828 / KAW 2/3).